The chain runs to 137 residues: MPTTNQLVNRGRTSKVQKQNAPALSWSYNSLIKRSKKMPSPFKRGVCTRVATMTPKKPNSALRKFARVKLSNGMEVTAYIPGEKHNIQEHSVVLIRGGRVKDLPGVRYHIVRGTQDVAGVNNRKQGRSLYGTKKDKK.

Residues 1-20 (MPTTNQLVNRGRTSKVQKQN) are disordered. 3-methylthioaspartic acid is present on aspartate 102.

Belongs to the universal ribosomal protein uS12 family. In terms of assembly, part of the 30S ribosomal subunit. Contacts proteins S8 and S17. May interact with IF1 in the 30S initiation complex.

Functionally, with S4 and S5 plays an important role in translational accuracy. In terms of biological role, interacts with and stabilizes bases of the 16S rRNA that are involved in tRNA selection in the A site and with the mRNA backbone. Located at the interface of the 30S and 50S subunits, it traverses the body of the 30S subunit contacting proteins on the other side and probably holding the rRNA structure together. The combined cluster of proteins S8, S12 and S17 appears to hold together the shoulder and platform of the 30S subunit. The sequence is that of Small ribosomal subunit protein uS12 from Mycoplasmopsis synoviae (strain 53) (Mycoplasma synoviae).